The chain runs to 838 residues: Urease (838 aa).

The Urease domain maps to 400–838 (GAIDCHVHFI…VPLSRNYFLF (439 aa)). Residues histidine 405, histidine 407, and lysine 488 each contribute to the Ni(2+) site. At lysine 488 the chain carries N6-carboxylysine. Histidine 490 contributes to the substrate binding site. Ni(2+)-binding residues include histidine 517 and histidine 543. Histidine 591 functions as the Proton donor in the catalytic mechanism. Aspartate 631 provides a ligand contact to Ni(2+).

It in the C-terminal section; belongs to the metallo-dependent hydrolases superfamily. Urease alpha subunit family. Homohexamer. Other oligomeric forms may exist depending on pH and presence of salts. Ni(2+) serves as cofactor. Post-translationally, carboxylation allows a single lysine to coordinate two nickel ions.

It catalyses the reaction urea + 2 H2O + H(+) = hydrogencarbonate + 2 NH4(+). The protein operates within nitrogen metabolism; urea degradation; CO(2) and NH(3) from urea (urease route): step 1/1. Requires the three urease accessory proteins URED, UREF AND UREG for its activation. In terms of biological role, urea hydrolase involved in nitrogen recycling from ureide, purine, and arginine catabolism. This Arabidopsis thaliana (Mouse-ear cress) protein is Urease.